The primary structure comprises 316 residues: Acetylglutamate kinase (316 aa).

Residues 65–66 (GG), arginine 87, and asparagine 179 each bind substrate.

The protein belongs to the acetylglutamate kinase family. ArgB subfamily.

The protein localises to the cytoplasm. The catalysed reaction is N-acetyl-L-glutamate + ATP = N-acetyl-L-glutamyl 5-phosphate + ADP. It functions in the pathway amino-acid biosynthesis; L-arginine biosynthesis; N(2)-acetyl-L-ornithine from L-glutamate: step 2/4. Functionally, catalyzes the ATP-dependent phosphorylation of N-acetyl-L-glutamate. This is Acetylglutamate kinase from Alkaliphilus metalliredigens (strain QYMF).